The primary structure comprises 150 residues: SsrA-binding protein (150 aa).

It belongs to the SmpB family.

Its subcellular location is the cytoplasm. Its function is as follows. Required for rescue of stalled ribosomes mediated by trans-translation. Binds to transfer-messenger RNA (tmRNA), required for stable association of tmRNA with ribosomes. tmRNA and SmpB together mimic tRNA shape, replacing the anticodon stem-loop with SmpB. tmRNA is encoded by the ssrA gene; the 2 termini fold to resemble tRNA(Ala) and it encodes a 'tag peptide', a short internal open reading frame. During trans-translation Ala-aminoacylated tmRNA acts like a tRNA, entering the A-site of stalled ribosomes, displacing the stalled mRNA. The ribosome then switches to translate the ORF on the tmRNA; the nascent peptide is terminated with the 'tag peptide' encoded by the tmRNA and targeted for degradation. The ribosome is freed to recommence translation, which seems to be the essential function of trans-translation. The polypeptide is SsrA-binding protein (Magnetococcus marinus (strain ATCC BAA-1437 / JCM 17883 / MC-1)).